We begin with the raw amino-acid sequence, 417 residues long: RH-like protein IA (417 aa).

Transmembrane regions (helical) follow at residues 12–32 (CLPL…YFFT), 44–64 (LVAS…GFGF), 77–97 (VAFS…LDGF), 125–145 (ISVD…MVLV), 172–192 (IYVF…KPLP), 203–223 (TIPS…WPSF), 238–258 (VFNT…GSSL), 265–285 (ISMS…GTSC), 287–307 (LITS…ISIG), 331–351 (NFSL…VHHT), and 358–378 (MIGF…TIAL).

Belongs to the ammonium transporter (TC 2.A.49) family. Rh subfamily.

It is found in the membrane. Functionally, may be part of an oligomeric complex which is likely to have a transport or channel function in the erythrocyte membrane. This chain is RH-like protein IA, found in Pan troglodytes (Chimpanzee).